A 424-amino-acid chain; its full sequence is UDP-glycosyltransferase 76H1 (424 aa).

UDP-alpha-D-glucose is bound by residues Ser-248, Trp-306–Ala-307, His-324–Glu-332, and Phe-346–Gln-349.

The protein belongs to the UDP-glycosyltransferase family.

May glycosylate diterpenes or flavonols in leaves. The sequence is that of UDP-glycosyltransferase 76H1 from Stevia rebaudiana (Stevia).